Consider the following 619-residue polypeptide: MALLQIAEPGQAAAPHQHRLAVGIDLGTTNSLVASVRSGQSVILNDEQERSLVPSVVHYGVEEKKVGLEAFEQASLDPKNTVISVKRLIGRSLPDVQSRYSSLPYEFVASENGLPLIITAQGPKSPIEVSSDILSRLNHIAEQRLGGELSGVVITVPAYFDDAQRQSTKDAARLAGLNVLRLLNEPTAAALAYGLDSGQEGIIAVYDLGGGTFDISILRLSKGIFEVLATGGDTALGGDDFDHLIADWVIEQTKLKPQTANQQRELITLANQAKITLTNEKSAVISWQDFSVEISREQFNELIYPLVKRSLLTCRRALKDANVESEEVQAVVMVGGSTRVPYVREQVGEFFGKTPLTSIDPDKVVALGAAIQADILVGNKTDSDMLLLDVVPLSLGIETMGGLVEKIIPRNTTIPVARAQEFTTFKDGQTAMSVHVLQGERELVDDCRSLGRFTLRGIPPMAAGAAHIRVTYQVDADGLLSVTAMEKSTKVQASIQIKPSYGLTDEEVTAMIKSSFDNAQEDLQARELAEQRVEADRVIESVIVALQADGAELLSTDEFHHIETVLKQLMDVKQGSDRDAIAQGIKALDTATQEFAARRMNASINKALTGKNLSDIENP.

Belongs to the heat shock protein 70 family.

Functionally, chaperone involved in the maturation of iron-sulfur cluster-containing proteins. Has a low intrinsic ATPase activity which is markedly stimulated by HscB. The chain is Chaperone protein HscA homolog from Haemophilus influenzae (strain 86-028NP).